Reading from the N-terminus, the 194-residue chain is Imidazoleglycerol-phosphate dehydratase (194 aa).

This sequence belongs to the imidazoleglycerol-phosphate dehydratase family.

Its subcellular location is the cytoplasm. The catalysed reaction is D-erythro-1-(imidazol-4-yl)glycerol 3-phosphate = 3-(imidazol-4-yl)-2-oxopropyl phosphate + H2O. The protein operates within amino-acid biosynthesis; L-histidine biosynthesis; L-histidine from 5-phospho-alpha-D-ribose 1-diphosphate: step 6/9. This is Imidazoleglycerol-phosphate dehydratase from Bacillus licheniformis (strain ATCC 14580 / DSM 13 / JCM 2505 / CCUG 7422 / NBRC 12200 / NCIMB 9375 / NCTC 10341 / NRRL NRS-1264 / Gibson 46).